A 139-amino-acid polypeptide reads, in one-letter code: Large-conductance mechanosensitive channel (139 aa).

A run of 3 helical transmembrane segments spans residues 14–34, 38–58, and 82–102; these read VVDL…VNSA, IFMP…YYIP, and GQFL…FLVI.

This sequence belongs to the MscL family. In terms of assembly, homopentamer.

It localises to the cell inner membrane. Its function is as follows. Channel that opens in response to stretch forces in the membrane lipid bilayer. May participate in the regulation of osmotic pressure changes within the cell. The sequence is that of Large-conductance mechanosensitive channel from Methylobacterium radiotolerans (strain ATCC 27329 / DSM 1819 / JCM 2831 / NBRC 15690 / NCIMB 10815 / 0-1).